We begin with the raw amino-acid sequence, 164 residues long: UPF0303 protein R02983 (164 aa).

The protein belongs to the UPF0303 family.

This Rhizobium meliloti (strain 1021) (Ensifer meliloti) protein is UPF0303 protein R02983.